We begin with the raw amino-acid sequence, 366 residues long: Peptide chain release factor 2 (366 aa).

At Gln-251 the chain carries N5-methylglutamine.

The protein belongs to the prokaryotic/mitochondrial release factor family. In terms of processing, methylated by PrmC. Methylation increases the termination efficiency of RF2.

Its subcellular location is the cytoplasm. In terms of biological role, peptide chain release factor 2 directs the termination of translation in response to the peptide chain termination codons UGA and UAA. This chain is Peptide chain release factor 2 (prfB), found in Listeria monocytogenes serotype 4b (strain F2365).